The sequence spans 326 residues: Thioredoxin reductase (326 aa).

55 to 62 contributes to the FAD binding site; the sequence is EGPEPGGQ. Cys156 and Cys159 are oxidised to a cystine. FAD is bound at residue 298–307; the sequence is DVSNKLYAQA.

Belongs to the class-II pyridine nucleotide-disulfide oxidoreductase family. As to quaternary structure, homodimer. The cofactor is FAD.

It localises to the cytoplasm. It catalyses the reaction [thioredoxin]-dithiol + NADP(+) = [thioredoxin]-disulfide + NADPH + H(+). The protein is Thioredoxin reductase (trxB) of Borreliella burgdorferi (strain ATCC 35210 / DSM 4680 / CIP 102532 / B31) (Borrelia burgdorferi).